The primary structure comprises 355 residues: dTDP-D-glucose 4,6-dehydratase (355 aa).

Substrate is bound at residue threonine 142. Catalysis depends on aspartate 143, which acts as the Proton donor. Residues glutamate 144 and tyrosine 166 each act as proton acceptor in the active site.

It belongs to the NAD(P)-dependent epimerase/dehydratase family. dTDP-glucose dehydratase subfamily. NAD(+) is required as a cofactor.

It catalyses the reaction dTDP-alpha-D-glucose = dTDP-4-dehydro-6-deoxy-alpha-D-glucose + H2O. In Bos taurus (Bovine), this protein is dTDP-D-glucose 4,6-dehydratase (TGDS).